The sequence spans 123 residues: Protein Wnt-7a (123 aa).

Ser-1 is lipidated: O-palmitoleoyl serine; by PORCN. The segment at 33–61 (VEPVRTHRNKRPVFLKIKKPLSYRKPMVT) is disordered linker. A disulfide bridge connects residues Cys-89 and Cys-104. N-linked (GlcNAc...) asparagine glycosylation is found at Asn-90 and Asn-96.

It belongs to the Wnt family. As to quaternary structure, forms a soluble 1:1 complex with AFM; this prevents oligomerization and is required for prolonged biological activity. The complex with AFM may represent the physiological form in body fluids. Interacts with FZD5. Interacts with PORCN. In terms of processing, palmitoleoylation is required for efficient binding to frizzled receptors. Depalmitoleoylation leads to Wnt signaling pathway inhibition.

It localises to the secreted. It is found in the extracellular space. The protein localises to the extracellular matrix. Functionally, ligand for members of the frizzled family of seven transmembrane receptors that functions in the canonical Wnt/beta-catenin signaling pathway. Plays an important role in embryonic development, including dorsal versus ventral patterning during limb development, skeleton development and urogenital tract development. Required for central nervous system (CNS) angiogenesis and blood-brain barrier regulation. The sequence is that of Protein Wnt-7a (WNT-7A) from Alopias vulpinus (Common thresher shark).